A 152-amino-acid chain; its full sequence is Transcriptional regulator MraZ (152 aa).

SpoVT-AbrB domains lie at 5-52 (VNQL…PLPE) and 81-124 (AQEL…DESL).

This sequence belongs to the MraZ family. As to quaternary structure, forms oligomers.

The protein resides in the cytoplasm. The protein localises to the nucleoid. In Halorhodospira halophila (strain DSM 244 / SL1) (Ectothiorhodospira halophila (strain DSM 244 / SL1)), this protein is Transcriptional regulator MraZ.